A 126-amino-acid polypeptide reads, in one-letter code: uncharacterized protein (126 aa).

Thr68 carries the phosphothreonine modification.

This is an uncharacterized protein from Pseudomonas aeruginosa (strain UCBPP-PA14).